A 285-amino-acid polypeptide reads, in one-letter code: Putative lipoprotein SCO4650 (285 aa).

The first 20 residues, 1 to 20 (MTGTTARRTVVSVAVSAALA), serve as a signal peptide directing secretion. Cys-21 carries the N-palmitoyl cysteine lipid modification. Cys-21 carries the S-diacylglycerol cysteine lipid modification. The segment at 27-63 (GPGGSDDAGHSTGPTGSARPSASAPASSRAPALTGPS) is disordered. A compositionally biased stretch (low complexity) spans 43–58 (SARPSASAPASSRAPA).

The protein localises to the cell membrane. This is Putative lipoprotein SCO4650 from Streptomyces coelicolor (strain ATCC BAA-471 / A3(2) / M145).